The primary structure comprises 188 residues: ATP synthase subunit b 2 (188 aa).

A helical transmembrane segment spans residues 41–61 (FFWLVISFGFFYFFIARVIVP).

It belongs to the ATPase B chain family. F-type ATPases have 2 components, F(1) - the catalytic core - and F(0) - the membrane proton channel. F(1) has five subunits: alpha(3), beta(3), gamma(1), delta(1), epsilon(1). F(0) has three main subunits: a(1), b(2) and c(10-14). The alpha and beta chains form an alternating ring which encloses part of the gamma chain. F(1) is attached to F(0) by a central stalk formed by the gamma and epsilon chains, while a peripheral stalk is formed by the delta and b chains.

The protein resides in the cell inner membrane. Functionally, f(1)F(0) ATP synthase produces ATP from ADP in the presence of a proton or sodium gradient. F-type ATPases consist of two structural domains, F(1) containing the extramembraneous catalytic core and F(0) containing the membrane proton channel, linked together by a central stalk and a peripheral stalk. During catalysis, ATP synthesis in the catalytic domain of F(1) is coupled via a rotary mechanism of the central stalk subunits to proton translocation. In terms of biological role, component of the F(0) channel, it forms part of the peripheral stalk, linking F(1) to F(0). The b'-subunit is a diverged and duplicated form of b found in plants and photosynthetic bacteria. This chain is ATP synthase subunit b 2 (atpF2), found in Bartonella bacilliformis (strain ATCC 35685 / KC583 / Herrer 020/F12,63).